Reading from the N-terminus, the 289-residue chain is Small ribosomal subunit protein uS2C (289 aa).

The protein belongs to the universal ribosomal protein uS2 family. Component of the small ribosomal subunit. Mature ribosomes consist of a small (40S) and a large (60S) subunit. The 40S subunit contains about 33 different proteins and 1 molecule of RNA (18S). The 60S subunit contains about 49 different proteins and 3 molecules of RNA (25S, 5.8S and 5S). Interacts with rps21.

The protein resides in the cytoplasm. In terms of biological role, required for the assembly and/or stability of the 40S ribosomal subunit. Required for the processing of the 20S rRNA-precursor to mature 18S rRNA in a late step of the maturation of 40S ribosomal subunits. This chain is Small ribosomal subunit protein uS2C (rps0c), found in Schizosaccharomyces japonicus (strain yFS275 / FY16936) (Fission yeast).